The following is a 507-amino-acid chain: Keratin, type II cuticular Hb5 (507 aa).

Residues 1–123 (MSCRSYRISP…PNAQCVKYEE (123 aa)) are head. Residues 123-434 (EKEQIKCLNS…RLLEGEEQRL (312 aa)) form the IF rod domain. The coil 1A stretch occupies residues 124–158 (KEQIKCLNSKFAAFIDKVRFLEQQNKLLETKWQFY). The tract at residues 159-168 (QNRKCCESNL) is linker 1. The tract at residues 169 to 269 (EPLFGGYIEA…YEEEVCVLQA (101 aa)) is coil 1B. A Glycyl lysine isopeptide (Lys-Gly) (interchain with G-Cter in SUMO1) cross-link involves residue Lys229. The linker 12 stretch occupies residues 270–286 (HISDTSVIVKMDNSRDL). A coil 2 region spans residues 287-430 (NMDCVVAEIK…ATYRRLLEGE (144 aa)). The interval 431-507 (EQRLCEGVGS…CGSSRSVRFA (77 aa)) is tail.

It belongs to the intermediate filament family. In terms of assembly, heterotetramer of two type I and two type II keratins.

The polypeptide is Keratin, type II cuticular Hb5 (Krt85) (Mus musculus (Mouse)).